Reading from the N-terminus, the 254-residue chain is tRNA (guanine-N(7)-)-methyltransferase (254 aa).

Over residues methionine 1 to leucine 11 the composition is skewed to basic and acidic residues. Positions methionine 1 to asparagine 25 are disordered. S-adenosyl-L-methionine contacts are provided by glutamate 83, glutamate 108, aspartate 135, and aspartate 158. Aspartate 158 is a catalytic residue. Lysine 162 contributes to the substrate binding site. Residues arginine 164–arginine 169 are interaction with RNA. Residues aspartate 194 and threonine 232 to glutamate 235 contribute to the substrate site.

This sequence belongs to the class I-like SAM-binding methyltransferase superfamily. TrmB family.

It carries out the reaction guanosine(46) in tRNA + S-adenosyl-L-methionine = N(7)-methylguanosine(46) in tRNA + S-adenosyl-L-homocysteine. It functions in the pathway tRNA modification; N(7)-methylguanine-tRNA biosynthesis. Functionally, catalyzes the formation of N(7)-methylguanine at position 46 (m7G46) in tRNA. In Corynebacterium efficiens (strain DSM 44549 / YS-314 / AJ 12310 / JCM 11189 / NBRC 100395), this protein is tRNA (guanine-N(7)-)-methyltransferase.